Consider the following 465-residue polypeptide: tRNA-2-methylthio-N(6)-dimethylallyladenosine synthase (465 aa).

Positions R18–Q136 constitute an MTTase N-terminal domain. [4Fe-4S] cluster is bound by residues C27, C63, C100, C174, C178, and C181. Residues G160–E392 form the Radical SAM core domain. One can recognise a TRAM domain in the interval K395 to E458.

This sequence belongs to the methylthiotransferase family. MiaB subfamily. In terms of assembly, monomer. [4Fe-4S] cluster is required as a cofactor.

It localises to the cytoplasm. It carries out the reaction N(6)-dimethylallyladenosine(37) in tRNA + (sulfur carrier)-SH + AH2 + 2 S-adenosyl-L-methionine = 2-methylsulfanyl-N(6)-dimethylallyladenosine(37) in tRNA + (sulfur carrier)-H + 5'-deoxyadenosine + L-methionine + A + S-adenosyl-L-homocysteine + 2 H(+). Its function is as follows. Catalyzes the methylthiolation of N6-(dimethylallyl)adenosine (i(6)A), leading to the formation of 2-methylthio-N6-(dimethylallyl)adenosine (ms(2)i(6)A) at position 37 in tRNAs that read codons beginning with uridine. The sequence is that of tRNA-2-methylthio-N(6)-dimethylallyladenosine synthase from Porphyromonas gingivalis (strain ATCC 33277 / DSM 20709 / CIP 103683 / JCM 12257 / NCTC 11834 / 2561).